The following is a 535-amino-acid chain: Probable anion transporter 2, chloroplastic (535 aa).

Residues 1-95 (MASIRSCVSV…RERAVAAMCS (95 aa)) constitute a chloroplast transit peptide. The next 12 helical transmembrane spans lie at 125-145 (VVALVAAVMLLCNADRVVMSV), 160-180 (FLGIVQSSFLWGYVFSSMVGG), 191-211 (VMAGAAALWSLATFLTPWAAS), 215-235 (IMLLAIRALFGLAEGVAFPTM), 254-274 (ISMGGFHLGNVISFLATPIIM), 279-299 (LAGTFAFFASLGYLWLSVWLF), 343-363 (IEMWAIIVANVVNNWGYFVLL), 381-401 (AAWFSAIPWAVMALSGYVAGA), 413-433 (VALVRKIMQSIGFIGPGVSLL), 443-463 (VAAVLMTIALSLSSFSQAGYF), 483-503 (GIGTVAAIVSTIGTGYFVQWL), and 504-524 (GSFQAFLTLTAVLYFSATVFY).

Belongs to the major facilitator superfamily. Sodium/anion cotransporter (TC 2.A.1.14) family.

It localises to the plastid. The protein resides in the chloroplast membrane. Probable anion transporter. This Oryza sativa subsp. japonica (Rice) protein is Probable anion transporter 2, chloroplastic (PHT4;2).